The chain runs to 396 residues: Gap junction gamma-1 protein (396 aa).

The Cytoplasmic segment spans residues 1–18 (MSWSFLTRLLEEIHNHST). The helical transmembrane segment at 19–39 (FVGKIWLTVLIVFRIVLTAVG) threads the bilayer. Residues 40-75 (GESIYYDEQSKFVCNTEQPGCENVCYDAFAPLSHVR) are Extracellular-facing. The chain crosses the membrane as a helical span at residues 76-96 (FWVFQIILVATPSVMYLGYAI). Residues 97–175 (HKIAKMEHGE…RRIREDGLMK (79 aa)) are Cytoplasmic-facing. The disordered stretch occupies residues 145–165 (ELESEKENKEQSQPKPKHDGR). Basic and acidic residues predominate over residues 147-156 (ESEKENKEQS). Residues 176-198 (IYVLQLLARTVFEVGFLIGQYFL) form a helical membrane-spanning segment. At 199–229 (YGFQVHPFYVCSRLPCPHKIDCFISRPTEKT) the chain is on the extracellular side. A helical membrane pass occupies residues 230–250 (IFLLIMYGVTGLCLLLNIWEM). The Cytoplasmic segment spans residues 251–396 (LHLGFGTIRD…SGDGKTSVWI (146 aa)). Positions 303-358 (ELSNAKIAYKQNKANIAQEQQYGSHEEHLPADLETLQREIRMAQERLDLAIQAYHH) form a coiled coil. Residues 357–396 (HHQNNPHGPREKKAKVGSKSGSNKSSISSKSGDGKTSVWI) are disordered. Low complexity predominate over residues 373 to 396 (GSKSGSNKSSISSKSGDGKTSVWI).

The protein belongs to the connexin family. Gamma-type subfamily. As to quaternary structure, a connexon is composed of a hexamer of connexins. Interacts with CNST.

Its subcellular location is the cell membrane. The protein resides in the cell junction. The protein localises to the gap junction. Its function is as follows. One gap junction consists of a cluster of closely packed pairs of transmembrane channels, the connexons, through which materials of low MW diffuse from one cell to a neighboring cell. This is Gap junction gamma-1 protein (GJC1) from Cricetulus griseus (Chinese hamster).